The following is a 517-amino-acid chain: Nucleoside transporter FUN26 (517 aa).

The interval 1 to 63 (MSTSADTDTI…EREQSVSTEP (63 aa)) is disordered. A compositionally biased stretch (basic and acidic residues) spans 25–44 (THSEEISRSGEEHESENNEH). 2 positions are modified to phosphoserine: Ser-45 and Ser-58. Helical transmembrane passes span 76–96 (LSYI…NCIL), 116–136 (IFTS…NIYL), 151–171 (LVWE…HFLL), 174–194 (WFNF…TAMT), 214–234 (MVGQ…LAFI), 243–263 (GGIL…VVMF), 344–364 (LVLS…FASA), 367–387 (VTGL…LWNL), 411–431 (TFIY…FTAI), 446–466 (IVDL…GHVI), and 492–512 (IFVS…VFII).

This sequence belongs to the SLC29A/ENT transporter (TC 2.A.57) family.

Its subcellular location is the membrane. In terms of biological role, has broad nucleoside selectivity (uridine, adenosine and cytidine) and most likely functions to transport nucleosides across intracellular membranes. This Saccharomyces cerevisiae (strain ATCC 204508 / S288c) (Baker's yeast) protein is Nucleoside transporter FUN26 (FUN26).